A 163-amino-acid chain; its full sequence is 3-dehydroquinate dehydratase (163 aa).

Residue tyrosine 28 is the Proton acceptor of the active site. Substrate-binding residues include asparagine 80, histidine 86, and aspartate 93. Catalysis depends on histidine 106, which acts as the Proton donor. Substrate-binding positions include 107–108 and arginine 117; that span reads IS.

The protein belongs to the type-II 3-dehydroquinase family. Homododecamer.

The enzyme catalyses 3-dehydroquinate = 3-dehydroshikimate + H2O. It functions in the pathway metabolic intermediate biosynthesis; chorismate biosynthesis; chorismate from D-erythrose 4-phosphate and phosphoenolpyruvate: step 3/7. Functionally, catalyzes a trans-dehydration via an enolate intermediate. In Bradyrhizobium sp. (strain BTAi1 / ATCC BAA-1182), this protein is 3-dehydroquinate dehydratase.